The following is a 384-amino-acid chain: N-acetyldiaminopimelate deacetylase (384 aa).

Asp74 is a catalytic residue. Residue Glu133 is the Proton acceptor of the active site.

It belongs to the peptidase M20A family. N-acetyldiaminopimelate deacetylase subfamily.

It catalyses the reaction N-acetyl-(2S,6S)-2,6-diaminopimelate + H2O = (2S,6S)-2,6-diaminopimelate + acetate. It participates in amino-acid biosynthesis; L-lysine biosynthesis via DAP pathway; LL-2,6-diaminopimelate from (S)-tetrahydrodipicolinate (acetylase route): step 3/3. Catalyzes the conversion of N-acetyl-diaminopimelate to diaminopimelate and acetate. This chain is N-acetyldiaminopimelate deacetylase, found in Leuconostoc mesenteroides subsp. mesenteroides (strain ATCC 8293 / DSM 20343 / BCRC 11652 / CCM 1803 / JCM 6124 / NCDO 523 / NBRC 100496 / NCIMB 8023 / NCTC 12954 / NRRL B-1118 / 37Y).